The following is a 410-amino-acid chain: Benzene 1,2-dioxygenase system ferredoxin--NAD(+) reductase subunit (410 aa).

Residue 4–35 participates in FAD binding; that stretch reads HVAIIGNGVAGFTTAQALRAEGYEGRISLIGE. 145 to 173 is a binding site for NAD(+); the sequence is RLLIVGGGLIGCEVATTARKLGLSVTILE.

It belongs to the bacterial ring-hydroxylating dioxygenase ferredoxin reductase family. As to quaternary structure, this dioxygenase system consists of four proteins: the two subunits of the hydroxylase component (BedC1 and BedC2), a ferredoxin (BedB) and a ferredoxin reductase (BedA). FAD serves as cofactor.

The enzyme catalyses 2 reduced [2Fe-2S]-[ferredoxin] + NAD(+) + H(+) = 2 oxidized [2Fe-2S]-[ferredoxin] + NADH. It functions in the pathway aromatic compound metabolism; benzene degradation; catechol from benzene: step 1/2. Functionally, part of the electron transfer component of benzene 1,2-dioxygenase, transfers electrons from ferredoxin to NADH. The protein is Benzene 1,2-dioxygenase system ferredoxin--NAD(+) reductase subunit (bedA) of Pseudomonas putida (Arthrobacter siderocapsulatus).